Reading from the N-terminus, the 632-residue chain is Galactan 5-O-arabinofuranosyltransferase (632 aa).

Transmembrane regions (helical) follow at residues 10-30, 45-65, 76-96, 162-182, 184-204, 206-226, 242-259, 263-282, 298-318, 344-364, 375-395, 409-429, and 434-454; these read QIVL…IAIA, ALTT…GGVW, LGGL…PLGA, WAIT…WQMI, FEYA…YSSP, PYAA…WSGL, GWAT…AATW, LLAY…ATAL, LAGI…PFLA, FPML…LWLI, ALMI…LTTL, LTVL…QSLA, and AVLS…SQDI. The Extracellular portion of the chain corresponds to 455–632; that stretch reads PNVLRPDLTI…LAIRKPMGNA (178 aa).

The protein belongs to the glycosyltransferase 85 family.

The protein localises to the cell membrane. The enzyme catalyses Adds an alpha-D-arabinofuranosyl group from trans,octacis-decaprenylphospho-beta-D-arabinofuranose at the 5-O-position of the eighth, tenth and twelfth galactofuranose unit of the galactofuranan chain of [beta-D-galactofuranosyl-(1-&gt;5)-beta-D-galactofuranosyl-(1-&gt;6)]14-beta-D-galactofuranosyl-(1-&gt;5)-beta-D-galactofuranosyl-(1-&gt;4)-alpha-L-rhamnopyranosyl-(1-&gt;3)-N-acetyl-alpha-D-glucosaminyl-diphospho-trans,octacis-decaprenol.. Its pathway is cell wall biogenesis; cell wall polysaccharide biosynthesis. Its function is as follows. Involved in the biosynthesis of the arabinogalactan (AG) region of the mycolylarabinogalactan-peptidoglycan (mAGP) complex, an essential component of the mycobacterial cell wall. Catalyzes the addition of the first key arabinofuranosyl (Araf) residue from the sugar donor decaprenyl-phospho-arabinose (DPA) on the C-5 of a 6-linked galactofuranosyl (Galf) of the galactan domain, thus 'priming' the galactan for further elaboration by other arabinofuranosyltransferases. This Mycobacterium leprae (strain TN) protein is Galactan 5-O-arabinofuranosyltransferase.